A 168-amino-acid chain; its full sequence is Endoribonuclease YbeY (168 aa).

Histidine 132, histidine 136, and histidine 142 together coordinate Zn(2+).

The protein belongs to the endoribonuclease YbeY family. The cofactor is Zn(2+).

The protein resides in the cytoplasm. Functionally, single strand-specific metallo-endoribonuclease involved in late-stage 70S ribosome quality control and in maturation of the 3' terminus of the 16S rRNA. This chain is Endoribonuclease YbeY, found in Clostridium perfringens (strain ATCC 13124 / DSM 756 / JCM 1290 / NCIMB 6125 / NCTC 8237 / Type A).